We begin with the raw amino-acid sequence, 298 residues long: Transcription factor bHLH114 (298 aa).

Residues 117 to 149 (LDHEIRNHKSSKEQITQDYKNLTSKRSEELEEN) adopt a coiled-coil conformation. The tract at residues 126–154 (SSKEQITQDYKNLTSKRSEELEENSDEYS) is disordered. Over residues 129–140 (EQITQDYKNLTS) the composition is skewed to polar residues. A bHLH domain is found at 163-212 (LETLSPLPSFKVRKEKLGDRITALQQLVSPFGKTDTASVLNEAVEYIKFL).

Homodimer. Differentiating root endodermis.

The protein resides in the nucleus. In Arabidopsis thaliana (Mouse-ear cress), this protein is Transcription factor bHLH114 (BHLH114).